Here is a 238-residue protein sequence, read N- to C-terminus: tRNA (guanine-N(7)-)-methyltransferase (238 aa).

S-adenosyl-L-methionine contacts are provided by Glu68, Glu93, Asp120, and Asp143. The active site involves Asp143. Substrate is bound by residues Lys147, Asp179, and 216–219 (TKFE).

This sequence belongs to the class I-like SAM-binding methyltransferase superfamily. TrmB family.

It carries out the reaction guanosine(46) in tRNA + S-adenosyl-L-methionine = N(7)-methylguanosine(46) in tRNA + S-adenosyl-L-homocysteine. It participates in tRNA modification; N(7)-methylguanine-tRNA biosynthesis. Its function is as follows. Catalyzes the formation of N(7)-methylguanine at position 46 (m7G46) in tRNA. This is tRNA (guanine-N(7)-)-methyltransferase from Ectopseudomonas mendocina (strain ymp) (Pseudomonas mendocina).